The following is a 712-amino-acid chain: Zinc finger and BTB domain-containing protein 39 (712 aa).

The region spanning 30-96 (CDVTIVVGSR…VYTSELFTDL (67 aa)) is the BTB domain. Disordered stretches follow at residues 129–162 (ARAK…LRGG), 176–224 (SDAG…IPSM), and 236–260 (GIQT…KNSF). The span at 134–147 (LTSTSESHSGTLSC) shows a compositional bias: polar residues. Residue lysine 183 forms a Glycyl lysine isopeptide (Lys-Gly) (interchain with G-Cter in SUMO2) linkage. The C2H2-type 1 zinc finger occupies 372 to 394 (GNCKVCETHFQDRNSRVTHVLSH). A C2H2-type 2; atypical zinc finger spans residues 400-422 (FSCDMCETKFFTQWQLTLHRRDG). Residue lysine 439 forms a Glycyl lysine isopeptide (Lys-Gly) (interchain with G-Cter in SUMO2) linkage. A C2H2-type 3; atypical zinc finger spans residues 480 to 502 (QACSVCDQRHLNLCSLMWHTLSH). C2H2-type zinc fingers lie at residues 508–530 (FSCS…MAVH), 538–560 (FHCR…VSQH), 605–627 (YSCK…RRIH), and 633–655 (YQCK…LKTH). The C2H2-type 8; atypical zinc-finger motif lies at 661–683 (YRCTVCGHYSSTLNLMSKHVGVH).

It belongs to the krueppel C2H2-type zinc-finger protein family.

It is found in the nucleus. Functionally, may be involved in transcriptional regulation. This chain is Zinc finger and BTB domain-containing protein 39 (ZBTB39), found in Homo sapiens (Human).